A 182-amino-acid chain; its full sequence is Peptidyl-tRNA hydrolase (182 aa).

Tyr14 provides a ligand contact to tRNA. His19 functions as the Proton acceptor in the catalytic mechanism. Residues Phe60, Asn62, and Asn106 each coordinate tRNA.

This sequence belongs to the PTH family. In terms of assembly, monomer.

It is found in the cytoplasm. It carries out the reaction an N-acyl-L-alpha-aminoacyl-tRNA + H2O = an N-acyl-L-amino acid + a tRNA + H(+). Hydrolyzes ribosome-free peptidyl-tRNAs (with 1 or more amino acids incorporated), which drop off the ribosome during protein synthesis, or as a result of ribosome stalling. Its function is as follows. Catalyzes the release of premature peptidyl moieties from peptidyl-tRNA molecules trapped in stalled 50S ribosomal subunits, and thus maintains levels of free tRNAs and 50S ribosomes. The sequence is that of Peptidyl-tRNA hydrolase from Campylobacter concisus (strain 13826).